The following is a 186-amino-acid chain: Pyridoxal 5'-phosphate synthase subunit PdxT (186 aa).

46-48 is a binding site for L-glutamine; sequence GES. The Nucleophile role is filled by C75. Residues R101 and 129–130 each bind L-glutamine; that span reads IR. Active-site charge relay system residues include H165 and E167.

The protein belongs to the glutaminase PdxT/SNO family. In terms of assembly, in the presence of PdxS, forms a dodecamer of heterodimers. Only shows activity in the heterodimer.

It catalyses the reaction aldehydo-D-ribose 5-phosphate + D-glyceraldehyde 3-phosphate + L-glutamine = pyridoxal 5'-phosphate + L-glutamate + phosphate + 3 H2O + H(+). The catalysed reaction is L-glutamine + H2O = L-glutamate + NH4(+). The protein operates within cofactor biosynthesis; pyridoxal 5'-phosphate biosynthesis. Catalyzes the hydrolysis of glutamine to glutamate and ammonia as part of the biosynthesis of pyridoxal 5'-phosphate. The resulting ammonia molecule is channeled to the active site of PdxS. The polypeptide is Pyridoxal 5'-phosphate synthase subunit PdxT (Staphylococcus aureus (strain Mu3 / ATCC 700698)).